The following is a 162-amino-acid chain: Sec-independent protein translocase protein TatB (162 aa).

The chain crosses the membrane as a helical span at residues 1–21 (MFDIGFSELILIFVVGLVVLG). The interval 136–162 (LTAYYPPDDDLVSPSTTKLEQDKQNVN) is disordered.

It belongs to the TatB family. The Tat system comprises two distinct complexes: a TatABC complex, containing multiple copies of TatA, TatB and TatC subunits, and a separate TatA complex, containing only TatA subunits. Substrates initially bind to the TatABC complex, which probably triggers association of the separate TatA complex to form the active translocon.

It is found in the cell inner membrane. Part of the twin-arginine translocation (Tat) system that transports large folded proteins containing a characteristic twin-arginine motif in their signal peptide across membranes. Together with TatC, TatB is part of a receptor directly interacting with Tat signal peptides. TatB may form an oligomeric binding site that transiently accommodates folded Tat precursor proteins before their translocation. The protein is Sec-independent protein translocase protein TatB of Haemophilus ducreyi (strain 35000HP / ATCC 700724).